Here is a 509-residue protein sequence, read N- to C-terminus: Cysteine--tRNA ligase (509 aa).

Cys-19 is a Zn(2+) binding site. The 'HIGH' region motif lies at 21 to 31; that stretch reads PTVYNDAHIGH. Cys-213, His-238, and Glu-242 together coordinate Zn(2+). Positions 284–288 match the 'KMSKS' region motif; sequence KMSKS. Lys-287 lines the ATP pocket.

It belongs to the class-I aminoacyl-tRNA synthetase family. Zn(2+) serves as cofactor.

It catalyses the reaction tRNA(Cys) + L-cysteine + ATP = L-cysteinyl-tRNA(Cys) + AMP + diphosphate. This Acanthamoeba polyphaga (Amoeba) protein is Cysteine--tRNA ligase (CARS).